A 495-amino-acid polypeptide reads, in one-letter code: ATP-NADH kinase YEF1 (495 aa).

The tract at residues 442-480 is disordered; sequence KYRLDSSKNGNDTISNPLESSCISSDAQDEERKSVTETE. A compositionally biased stretch (polar residues) spans 448-467; it reads SKNGNDTISNPLESSCISSD.

It belongs to the NAD kinase family. As to quaternary structure, homooctamer. It depends on Mg(2+) as a cofactor. The cofactor is Mn(2+). Co(2+) is required as a cofactor. Requires Ca(2+) as cofactor.

It catalyses the reaction NADH + ATP = ADP + NADPH + H(+). Its function is as follows. ATP-NADH kinase with a low phosphorylation activity of both NADH and NAD(+) to produce NADP and NADPH by using ATP. UTR1 is responsible for essentially all of the NAD/NADH kinase activity resident in the cytoplasm, whereas POS5 is responsible for all mitochondrial NAD/NADH kinase activity and consequent mitochondrial genome maintenance. YEF1 can substitute for UTR1 when overexpressed. This is ATP-NADH kinase YEF1 (YEF1) from Saccharomyces cerevisiae (strain ATCC 204508 / S288c) (Baker's yeast).